We begin with the raw amino-acid sequence, 244 residues long: MKQNNKKPLPSKTKEISLETDWIDVIETMRETNESPKSQNPSEEATTVNELSCEAKPKLLFTPTKSSLSIGNFPYKEFDPVLKFPGIHYTYSRERLWGTCVILSTLFWSYYVLSNSELLEFEASEYSLLFILIIALDALLTVSLFGLFHHLMFLTTNYSYTINSTLDISKGFFINVLSTMVQALVTVTIAFTKFVTIDFPIYVFSSLFLYHPLSRSRQLPTKMQLDGSGERKTDSSLVHQNPPN.

The segment at 30-49 (RETNESPKSQNPSEEATTVN) is disordered. Positions 35 to 49 (SPKSQNPSEEATTVN) are enriched in polar residues. 4 consecutive transmembrane segments (helical) span residues 96 to 116 (LWGT…LSNS), 128 to 148 (LLFI…FGLF), 171 to 191 (GFFI…TIAF), and 194 to 214 (FVTI…HPLS). The tract at residues 224–244 (QLDGSGERKTDSSLVHQNPPN) is disordered. A compositionally biased stretch (polar residues) spans 235–244 (SSLVHQNPPN).

It is found in the nucleus membrane. This is an uncharacterized protein from Schizosaccharomyces pombe (strain 972 / ATCC 24843) (Fission yeast).